We begin with the raw amino-acid sequence, 138 residues long: Small ribosomal subunit protein uS8c (138 aa).

The protein belongs to the universal ribosomal protein uS8 family. As to quaternary structure, part of the 30S ribosomal subunit.

It is found in the plastid. It localises to the chloroplast. Functionally, one of the primary rRNA binding proteins, it binds directly to 16S rRNA central domain where it helps coordinate assembly of the platform of the 30S subunit. The polypeptide is Small ribosomal subunit protein uS8c (rps8) (Oenothera elata subsp. hookeri (Hooker's evening primrose)).